Consider the following 443-residue polypeptide: Ribulose bisphosphate carboxylase large chain (443 aa).

Residues Asn89 and Thr139 each contribute to the substrate site. The active-site Proton acceptor is the Lys141. Lys143 contributes to the substrate binding site. Residues Lys167, Asp169, and Glu170 each contribute to the Mg(2+) site. Lys167 carries the N6-carboxylysine modification. The active-site Proton acceptor is His260. The substrate site is built by Arg261, His293, and Ser345.

It belongs to the RuBisCO large chain family. Type I subfamily. As to quaternary structure, heterohexadecamer of 8 large chains and 8 small chains; disulfide-linked. The disulfide link is formed within the large subunit homodimers. Mg(2+) serves as cofactor. Post-translationally, the disulfide bond which can form in the large chain dimeric partners within the hexadecamer appears to be associated with oxidative stress and protein turnover.

The protein localises to the plastid. It is found in the chloroplast. It carries out the reaction 2 (2R)-3-phosphoglycerate + 2 H(+) = D-ribulose 1,5-bisphosphate + CO2 + H2O. The catalysed reaction is D-ribulose 1,5-bisphosphate + O2 = 2-phosphoglycolate + (2R)-3-phosphoglycerate + 2 H(+). RuBisCO catalyzes two reactions: the carboxylation of D-ribulose 1,5-bisphosphate, the primary event in carbon dioxide fixation, as well as the oxidative fragmentation of the pentose substrate in the photorespiration process. Both reactions occur simultaneously and in competition at the same active site. This chain is Ribulose bisphosphate carboxylase large chain, found in Verbena bonariensis (Argentinian vervain).